The chain runs to 123 residues: Holo-[acyl-carrier-protein] synthase (123 aa).

Residues Asp-8 and Glu-55 each contribute to the Mg(2+) site.

It belongs to the P-Pant transferase superfamily. AcpS family. Requires Mg(2+) as cofactor.

The protein localises to the cytoplasm. The catalysed reaction is apo-[ACP] + CoA = holo-[ACP] + adenosine 3',5'-bisphosphate + H(+). Transfers the 4'-phosphopantetheine moiety from coenzyme A to a Ser of acyl-carrier-protein. This chain is Holo-[acyl-carrier-protein] synthase, found in Solidesulfovibrio magneticus (strain ATCC 700980 / DSM 13731 / RS-1) (Desulfovibrio magneticus).